The following is a 78-amino-acid chain: Small ribosomal subunit protein uS17 (78 aa).

It belongs to the universal ribosomal protein uS17 family. Part of the 30S ribosomal subunit.

In terms of biological role, one of the primary rRNA binding proteins, it binds specifically to the 5'-end of 16S ribosomal RNA. This chain is Small ribosomal subunit protein uS17, found in Pelagibacter ubique (strain HTCC1062).